We begin with the raw amino-acid sequence, 180 residues long: Fucolectin-2 (180 aa).

The N-terminal stretch at 1–22 is a signal peptide; it reads MKVKMIMLLFQILAILTLKSDS. The tract at residues 31 to 179 is F5/8 type C-like; the sequence is QENVALRGRA…VEVNVLFPAP (149 aa). Positions 58, 61, 63, and 72 each coordinate Ca(2+). Intrachain disulfides connect cysteine 73–cysteine 168, cysteine 104–cysteine 105, and cysteine 130–cysteine 146. Alpha-L-fucose-binding residues include histidine 75 and arginine 101. The Cell attachment site motif lies at 101–103; sequence RGD. Arginine 108 contributes to the alpha-L-fucose binding site. Ca(2+) contacts are provided by cysteine 168 and glutamate 169.

It belongs to the fucolectin family. As to quaternary structure, homotrimer. As to expression, parenchymal hepatocytes.

The protein resides in the secreted. It is found in the extracellular space. Its function is as follows. Acts as a defensive agent. Recognizes blood group fucosylated oligosaccharides including A, B, H and Lewis B-type antigens. Does not recognize Lewis A antigen and has low affinity for monovalent haptens. The protein is Fucolectin-2 of Anguilla japonica (Japanese eel).